The following is an 860-amino-acid chain: Endo-1,4-beta-xylanase B (860 aa).

The signal sequence occupies residues 1–20 (MKFSSANKILFSGLVASANA). The region spanning 21-324 (YDLLKDYAGD…KPVYNTLLNI (304 aa)) is the GH10 domain. Catalysis depends on E144, which acts as the Proton donor. Catalysis depends on E255, which acts as the Nucleophile. C278 and C284 are joined by a disulfide. N-linked (GlcNAc...) asparagine glycans are attached at residues N295, N309, N359, and N374. Composition is skewed to polar residues over residues 330-362 (RPAS…NKSK) and 371-418 (LPGN…NSKT). The disordered stretch occupies residues 330 to 793 (RPASSSAKTL…TKTLPGGACK (464 aa)). The stretch at 375 to 382 (KSKTLPGG) is repeat 1. Residues 375-782 (KSKTLPGGNS…GGKSKTLPGG (408 aa)) form a 47 X 8 AA tandem repeats of [SKN]-S-K-T-L-P-G-G region. The N-linked (GlcNAc...) asparagine glycan is linked to N390. Residues 391–398 (KSKTLPGG) form repeat 2. N-linked (GlcNAc...) asparagine glycosylation occurs at N406. 45 repeat units span residues 415-422 (NSKTLPGG), 431-438 (NSKTLPGG), 439-446 (KSKTLPGG), 447-454 (NSKTLPGG), 455-462 (KSKTLPGG), 463-470 (NSKTLPGG), 471-478 (SSKTLPGG), 479-486 (KSKTLPGG), 487-494 (NSKTLPGG), 495-502 (SSKTLPGG), 503-510 (KSKTLPGG), 511-518 (SSKTLPGG), 519-526 (KSKTLPGG), 527-534 (NSKTLPGG), 535-542 (NSKTLPGG), 543-550 (SSKTLPGG), 551-558 (KSKTLPGG), 559-566 (NSKTLPGG), 567-574 (SSKTLPGG), 575-582 (KSKTLPGG), 583-590 (NSKTLPGG), 591-598 (NSKTLPGG), 599-606 (KSKTLPGG), 607-614 (NSKTLPGG), 615-622 (SSKTLPGG), 623-630 (KSKTLPGG), 631-638 (SSKTLPGG), 639-646 (KSKTLPGG), 647-654 (NSKTLPGG), 655-662 (NSKTLPGG), 663-670 (SSKTLPGG), 671-678 (KSKTLPGG), 679-686 (SSKTLPGG), 687-694 (KSKTLPGG), 695-702 (NSKTLPGG), 703-710 (KSKTLPGG), 711-718 (NSKTLPGG), 719-726 (KSKTLPGG), 727-734 (NSKTLPGG), 735-742 (KSKTLPGG), 743-750 (NSKTLPGG), 751-758 (SSKTLPGG), 759-766 (KSKTLPGG), 767-774 (NSKTLPGG), and 775-782 (KSKTLPGG). 2 stretches are compositionally biased toward polar residues: residues 461 to 474 (GGNS…SSKT) and 485 to 498 (GGNS…SSKT). Polar residues-rich tracts occupy residues 525–546 (GGNS…SSKT), 557–570 (GGNS…SSKT), 581–594 (GGNS…NSKT), and 605–618 (GGNS…SSKT). Residues 645–666 (GGNSKTLPGGNSKTLPGGSSKT) show a composition bias toward polar residues. Over residues 741–754 (GGNSKTLPGGSSKT) the composition is skewed to polar residues. Residues 824–860 (NCAAKWGQCGGNGFNGPTCCQNGSRCQFVNEWYSQCL) enclose the CBM1 domain. N845 carries an N-linked (GlcNAc...) asparagine glycan.

Belongs to the glycosyl hydrolase 10 (cellulase F) family.

It localises to the secreted. The enzyme catalyses Endohydrolysis of (1-&gt;4)-beta-D-xylosidic linkages in xylans.. It participates in glycan degradation; xylan degradation. Functionally, endo-1,4-beta-xylanase involved in the hydrolysis of xylan, a major structural heterogeneous polysaccharide found in plant biomass representing the second most abundant polysaccharide in the biosphere, after cellulose. Hydrolyzes both unsubstituted (oat spelts) and highly substituted (rye and wheat) forms of arabinoxylanslans. This chain is Endo-1,4-beta-xylanase B (xynB), found in Neocallimastix patriciarum (Rumen fungus).